Consider the following 1041-residue polypeptide: Protein SMAX1-like (1041 aa).

One can recognise a Clp R domain in the interval 8 to 188 (IQQTLTPEAA…KSIIEQSLSA (181 aa)). 2 repeat regions span residues 12-98 (LTPE…LDRL) and 117-188 (VSNA…SLSA). Positions 189 to 205 (PSPCPSAAASTTTAGPG) are enriched in low complexity. Disordered stretches follow at residues 189 to 214 (PSPC…PSPL), 482 to 513 (EAEQ…QNKA), and 889 to 913 (EGSH…VKRS). The span at 482–495 (EAEQTDKPASRPEA) shows a compositional bias: basic and acidic residues. The segment covering 891-900 (SHNSSDVSVE) has biased composition (polar residues).

It belongs to the ClpA/ClpB family.

May act downstream of MAX2 to negatively regulate karrikins/strigolactone responses. Acts probably specifically in the karrikin pathway. May function in a transcriptional corepressor complex. This Oryza sativa subsp. japonica (Rice) protein is Protein SMAX1-like.